The chain runs to 371 residues: Putative glutamate--cysteine ligase 2 (371 aa).

The protein belongs to the glutamate--cysteine ligase type 2 family. YbdK subfamily.

It catalyses the reaction L-cysteine + L-glutamate + ATP = gamma-L-glutamyl-L-cysteine + ADP + phosphate + H(+). ATP-dependent carboxylate-amine ligase which exhibits weak glutamate--cysteine ligase activity. In Burkholderia thailandensis (strain ATCC 700388 / DSM 13276 / CCUG 48851 / CIP 106301 / E264), this protein is Putative glutamate--cysteine ligase 2.